Consider the following 131-residue polypeptide: Large ribosomal subunit protein eL32 (131 aa).

This sequence belongs to the eukaryotic ribosomal protein eL32 family.

In Sulfurisphaera tokodaii (strain DSM 16993 / JCM 10545 / NBRC 100140 / 7) (Sulfolobus tokodaii), this protein is Large ribosomal subunit protein eL32 (rpl32e).